The primary structure comprises 244 residues: DNA repair protein RecO (244 aa).

Belongs to the RecO family.

Functionally, involved in DNA repair and RecF pathway recombination. This chain is DNA repair protein RecO, found in Jannaschia sp. (strain CCS1).